We begin with the raw amino-acid sequence, 530 residues long: Feruloyl esterase C (530 aa).

An N-terminal signal peptide occupies residues 1–25 (MMLTSAILLLTLGVQLSHADDSSRE). Cystine bridges form between Cys31–Cys78, Cys66–Cys117, Cys190–Cys444, Cys259–Cys276, Cys285–Cys294, and Cys506–Cys528. The active-site Acyl-ester intermediate is Ser191. Positions 260, 263, 265, 267, and 269 each coordinate Ca(2+). Catalysis depends on charge relay system residues Asp403 and His443.

The protein belongs to the tannase family.

The protein resides in the secreted. The enzyme catalyses feruloyl-polysaccharide + H2O = ferulate + polysaccharide.. In terms of biological role, involved in degradation of plant cell walls. Hydrolyzes the feruloyl-arabinose ester bond in arabinoxylans as well as the feruloyl-galactose and feruloyl-arabinose ester bonds in pectin. Active against methyl esters of sinapate (MSA) and caffeate (MCA). This chain is Feruloyl esterase C (faeC), found in Talaromyces stipitatus (strain ATCC 10500 / CBS 375.48 / QM 6759 / NRRL 1006) (Penicillium stipitatum).